The primary structure comprises 91 residues: Probable Fe(2+)-trafficking protein (91 aa).

It belongs to the Fe(2+)-trafficking protein family.

In terms of biological role, could be a mediator in iron transactions between iron acquisition and iron-requiring processes, such as synthesis and/or repair of Fe-S clusters in biosynthetic enzymes. In Actinobacillus pleuropneumoniae serotype 5b (strain L20), this protein is Probable Fe(2+)-trafficking protein.